The sequence spans 359 residues: Acyl-CoA desaturase 3 (359 aa).

The tract at residues 1–34 is disordered; it reads MPGHLLQEEMTPSYTTTTTITAPPSGSLQNGREK. Residues 1 to 72 are Cytoplasmic-facing; sequence MPGHLLQEEM…EGPPPKLEYV (72 aa). Over residues 11–27 the composition is skewed to low complexity; it reads TPSYTTTTTITAPPSGS. The chain crosses the membrane as a helical span at residues 73–93; that stretch reads WRNIILMALLHVGALYGITLV. Asparagine 75 is a binding site for substrate. Topologically, residues 94–97 are lumenal; sequence PSCK. Residues 98-118 form a helical membrane-spanning segment; it reads LYTCLFAFVYYVISIEGIGAG. Over 119–217 the chain is Cytoplasmic; that stretch reads VHRLWSHRTY…EKLVMFQRRY (99 aa). Fe cation contacts are provided by histidine 120 and histidine 125. A Histidine box-1 motif is present at residues 120–125; it reads HRLWSH. Residues asparagine 148, arginine 155, and aspartate 156 each contribute to the substrate site. The Fe cation site is built by histidine 157, histidine 160, and histidine 161. The short motif at 157–161 is the Histidine box-2 element; it reads HRAHH. Substrate contacts are provided by arginine 188 and lysine 189. Serine 203 bears the Phosphoserine mark. Residues 218–237 traverse the membrane as a helical segment; the sequence is YKPGILLMCFILPTLVPWYC. The Lumenal portion of the chain corresponds to 238–241; the sequence is WGET. The helical transmembrane segment at 242-263 threads the bilayer; sequence FLNSFYVATLLRYAVVLNATWL. Residue tryptophan 262 participates in substrate binding. The Cytoplasmic portion of the chain corresponds to 264-359; the sequence is VNSAAHLYGY…RTGDGSHKSG (96 aa). Fe cation-binding residues include histidine 269, histidine 298, histidine 301, and histidine 302. The Histidine box-3 motif lies at 298 to 302; sequence HNYHH.

This sequence belongs to the fatty acid desaturase type 1 family. Requires Fe(2+) as cofactor. As to expression, detected in skin, but at lower levels compared to Scd1. Detected in the middlle part of the sebaceous gland, but not in hair follicle. Not detected in liver and brain.

It is found in the endoplasmic reticulum membrane. The protein resides in the microsome membrane. The catalysed reaction is hexadecanoyl-CoA + 2 Fe(II)-[cytochrome b5] + O2 + 2 H(+) = (9Z)-hexadecenoyl-CoA + 2 Fe(III)-[cytochrome b5] + 2 H2O. In terms of biological role, stearoyl-CoA desaturase that utilizes O(2) and electrons from reduced cytochrome b5 to introduce the first double bond into saturated fatty acyl-CoA substrates. Catalyzes the insertion of a cis double bond at the delta-9 position into fatty acyl-CoA substrates including palmitoyl-CoA. Has a strong preference for saturated fatty acids with chain lengths of 14 or 16 carbon atoms (C14:0 and C16:0), and has only very low activity with stearatate (C18:0). Required for the biosynthesis of membrane phospholipids, cholesterol esters and triglycerides. This Mus musculus (Mouse) protein is Acyl-CoA desaturase 3.